We begin with the raw amino-acid sequence, 972 residues long: Cycloisomaltooligosaccharide glucanotransferase (972 aa).

Residues M1–A38 form the signal peptide. CBM6 domains are found at residues T421–G546 and D748–D871.

This sequence belongs to the glycosyl hydrolase 66 family. Monomer.

The catalysed reaction is cyclizes part of a (1-&gt;6)-alpha-D-glucan chain by formation of a (1-&gt;6)-alpha-D-glucosidic bond.. Its function is as follows. Produces cycloisomaltooligosaccharide from dextran containing 7, 8 or 9 glucose units. The enzyme is specific for (1-&gt;6)-alpha-D-glucans (dextrans) and, without activity toward (1-&gt;4)-alpha-D-glucans, such as amylose. It also has no activity on oligosaccharides, such as amylopectin and pullulan, containing (1-&gt;6)-alpha-D-glucosidic linkages at branch points. This chain is Cycloisomaltooligosaccharide glucanotransferase, found in Niallia circulans (Bacillus circulans).